The primary structure comprises 177 residues: Ubiquitin-conjugating enzyme E2 C (177 aa).

A disordered region spans residues 1–31 (MSGQNIDPAANQVRQKERPRDMTTSKERHSV). The segment covering 14 to 30 (RQKERPRDMTTSKERHS) has biased composition (basic and acidic residues). Residues 30 to 175 (SVSKRLQQEL…LHEKYKTAQS (146 aa)) form the UBC core domain. The active-site Glycyl thioester intermediate is the Cys114.

The protein belongs to the ubiquitin-conjugating enzyme family. In terms of assembly, component of the APC/C complex. Autoubiquitinated by the APC/C complex, leading to its degradation by the proteasome.

It catalyses the reaction S-ubiquitinyl-[E1 ubiquitin-activating enzyme]-L-cysteine + [E2 ubiquitin-conjugating enzyme]-L-cysteine = [E1 ubiquitin-activating enzyme]-L-cysteine + S-ubiquitinyl-[E2 ubiquitin-conjugating enzyme]-L-cysteine.. The enzyme catalyses S-ubiquitinyl-[E1 ubiquitin-activating enzyme]-L-cysteine + [acceptor protein]-L-lysine = [E1 ubiquitin-activating enzyme]-L-cysteine + N(6)-monoubiquitinyl-[acceptor protein]-L-lysine.. The protein operates within protein modification; protein ubiquitination. Catalyzes the covalent attachment of ubiquitin to other proteins. Acts as an essential factor of the anaphase promoting complex/cyclosome (APC/C), a cell cycle-regulated ubiquitin ligase that is essential for the transition from metaphase to anaphase in mitosis. Involved in both degradation of proteins responsible for maintaining sister chromatid cohesion at the onset of anaphase and of mitotic cyclins A and B at the exit of mitosis. Acts by initiating polyubiquitin chains on APC/C substrates, leading to the degradation of APC/C substrates by the proteasome and promoting mitotic exit. In Spisula solidissima (Atlantic surf-clam), this protein is Ubiquitin-conjugating enzyme E2 C (UBE2C).